We begin with the raw amino-acid sequence, 216 residues long: Elongation factor 1-beta (216 aa).

The interval 71 to 131 is disordered; that stretch reads GQASGVSASS…AKKKESGKSS (61 aa). Over residues 73–89 the composition is skewed to low complexity; that stretch reads ASGVSASSAPAAAAPAA. Residues 92-107 are compositionally biased toward acidic residues; the sequence is DEDDDDDMDLFGDETE. The segment covering 108–128 has biased composition (basic and acidic residues); the sequence is EDKKAAAEREAAKPAKKKESG.

It belongs to the EF-1-beta/EF-1-delta family. EF-1 is composed of 4 subunits: alpha, beta (1B-alpha=beta'), delta (1B-beta), and gamma (1B-gamma).

Functionally, EF-1-beta and EF-1-beta' stimulate the exchange of GDP bound to EF-1-alpha to GTP. This is Elongation factor 1-beta from Triticum aestivum (Wheat).